The sequence spans 1111 residues: Protein NETWORKED 1C (1111 aa).

The NAB domain maps to 13–93 (YSWWWDSHNT…ERYNHATGVI (81 aa)). Coiled-coil stretches lie at residues 202 to 287 (SESE…KESS), 314 to 605 (ERAS…LISE), and 642 to 752 (KTIG…LESK). The disordered stretch occupies residues 850-870 (TGGGRSMRKQDGGSGRMRKQS). A coiled-coil region spans residues 943–1009 (NREVNKRRVL…EGEEAIEKLF (67 aa)).

This sequence belongs to the NET family.

Plant-specific actin binding protein. May be part of a membrane-cytoskeletal adapter complex. The sequence is that of Protein NETWORKED 1C from Arabidopsis thaliana (Mouse-ear cress).